Here is a 1905-residue protein sequence, read N- to C-terminus: Bromodomain adjacent to zinc finger domain protein 2A (1905 aa).

2 disordered regions span residues Met-1–Ser-59 and Thr-362–Ser-434. 3 stretches are compositionally biased toward polar residues: residues Thr-35–Ser-59, Leu-379–Asp-391, and Thr-399–Gln-420. Residue Thr-507 is modified to Phosphothreonine. Phosphoserine is present on Ser-509. The MBD domain maps to Ile-546–Pro-617. Thr-548 is modified (phosphothreonine). Phosphoserine is present on Ser-613. A disordered region spans residues Ile-648–Lys-792. 2 consecutive DNA-binding regions (a.T hook) follow at residues Thr-649 to Ala-661 and Lys-670 to Thr-682. Residues Arg-656–Lys-668 show a composition bias toward basic and acidic residues. Residues Val-669 to Lys-678 show a composition bias toward basic residues. Lys-680 carries the post-translational modification N6-acetyllysine; by KAT8. Over residues Asn-686–Lys-709 the composition is skewed to basic and acidic residues. Positions Leu-693 to Lys-792 form a coiled coil. The span at Ile-710–Val-721 shows a compositional bias: basic residues. Positions Glu-725–Ala-734 are enriched in polar residues. Composition is skewed to basic and acidic residues over residues Lys-739–Lys-748 and Ala-756–Lys-792. Lys-799 carries the post-translational modification N6-acetyllysine. The 66-residue stretch at Ser-848–Phe-913 folds into the DDT domain. A Glycyl lysine isopeptide (Lys-Gly) (interchain with G-Cter in SUMO2) cross-link involves residue Lys-866. Phosphoserine is present on Ser-1051. Glycyl lysine isopeptide (Lys-Gly) (interchain with G-Cter in SUMO2) cross-links involve residues Lys-1150 and Lys-1172. Disordered stretches follow at residues Ser-1178–Gln-1220, Leu-1283–Asp-1318, and Met-1330–Ser-1412. At Ser-1184 the chain carries Phosphoserine. The segment at residues Ala-1186–Gly-1198 is a DNA-binding region (a.T hook 3). The span at Leu-1283–Ser-1293 shows a compositional bias: low complexity. Residues Glu-1306 to Ser-1315 show a composition bias toward acidic residues. Positions Asp-1345–Pro-1359 are enriched in polar residues. Ser-1397 carries the phosphoserine modification. Residues Pro-1404–Lys-1416 constitute a DNA-binding region (a.T hook 4). Ser-1559 carries the post-translational modification Phosphoserine. Glycyl lysine isopeptide (Lys-Gly) (interchain with G-Cter in SUMO2) cross-links involve residues Lys-1676 and Lys-1709. A PHD-type zinc finger spans residues Lys-1676–Gln-1726. 2 disordered regions span residues Gln-1734 to Glu-1755 and Glu-1769 to Arg-1789. A phosphoserine mark is found at Ser-1747, Ser-1770, Ser-1783, and Ser-1785. One can recognise a Bromo domain in the interval Arg-1793–Phe-1897.

It belongs to the WAL family. Component of the NoRC-1 ISWI chromatin remodeling complex at least composed of SMARCA1 and BAZ2A/TIP5, which regulates the spacing of histone octamers on the DNA template to facilitate access to DNA. Within the NoRC-1 ISWI chromatin remodeling complex interacts with SMARCA1; the interaction is direct. Component of the NoRC-5 ISWI chromatin remodeling complex (also called the NoRC nucleolar-remodeling complex), at least composed of SMARCA5/SNF2H and BAZ2A/TIP5, which regulates the spacing of histone octamers on the DNA template to facilitate access to DNA. Within the NoRC-5 ISWI chromatin remodeling complexes interacts with SMARCA5/SNF2H; the interaction is direct. Interacts with TTF1; the interaction is required for recruitment of the NoRC-5 ISWI chromatin remodeling complex to rDNA. Interacts with HDAC1. Interacts with SIN3A. Interacts with DNMT1 and DNM3B. Interacts with BEND3 and USP21. Post-translationally, acetylation at Lys-680 by KAT8/MOF promotes its dissociation from pRNA, affecting heterochromatin formation, nucleosome positioning and rDNA silencing. Deacetylation by SIRT1 in late S phase enhances pRNA-binding, allowing de novo DNA methylation and heterochromatin formation. Acetylation is high during S phase and declines to background levels in late S phase when the silent copies of rRNA genes are replicated. In terms of processing, ubiquitinated. Deubiquitinated by USP21 leading to its stabilization. As to expression, expressed at moderate levels in most tissues analyzed, including heart, brain, placenta, lung, skeletal muscle, kidney and pancreas.

It localises to the nucleus. The protein localises to the nucleolus. In terms of biological role, regulatory subunit of the ATP-dependent NoRC-1 and NoRC-5 ISWI chromatin remodeling complexes, which form ordered nucleosome arrays on chromatin and facilitate access to DNA during DNA-templated processes such as DNA replication, transcription, and repair. Both complexes regulate the spacing of nucleosomes along the chromatin and have the ability to slide mononucleosomes to the center of a DNA template. Directly stimulates the ATPase activity of SMARCA5 in the NoRC-5 ISWI chromatin remodeling complex. The NoRC-1 ISWI chromatin remodeling complex has a lower ATP hydrolysis rate than the NoRC-5 ISWI chromatin remodeling complex. Within the NoRC-5 ISWI chromatin remodeling complex, mediates silencing of a fraction of rDNA by recruiting histone-modifying enzymes and DNA methyltransferases, leading to heterochromatin formation and transcriptional silencing. In the complex, it plays a central role by being recruited to rDNA and by targeting chromatin modifying enzymes such as HDAC1, leading to repress RNA polymerase I transcription. Recruited to rDNA via its interaction with TTF1 and its ability to recognize and bind histone H4 acetylated on 'Lys-16' (H4K16ac), leading to deacetylation of H4K5ac, H4K8ac, H4K12ac but not H4K16ac. Specifically binds pRNAs, 150-250 nucleotide RNAs that are complementary in sequence to the rDNA promoter; pRNA-binding is required for heterochromatin formation and rDNA silencing. The chain is Bromodomain adjacent to zinc finger domain protein 2A (BAZ2A) from Homo sapiens (Human).